The sequence spans 276 residues: Large ribosomal subunit protein uL2 (276 aa).

A disordered region spans residues 223–276 (GAAMNPVDHPHGGGEGRAPRGRPPASPWGWQTKGLKTRKRRKPSSRFIIARRKK). Residues 230 to 240 (DHPHGGGEGRA) show a composition bias toward basic and acidic residues. Over residues 257–276 (LKTRKRRKPSSRFIIARRKK) the composition is skewed to basic residues.

This sequence belongs to the universal ribosomal protein uL2 family. As to quaternary structure, part of the 50S ribosomal subunit. Forms a bridge to the 30S subunit in the 70S ribosome.

In terms of biological role, one of the primary rRNA binding proteins. Required for association of the 30S and 50S subunits to form the 70S ribosome, for tRNA binding and peptide bond formation. It has been suggested to have peptidyltransferase activity; this is somewhat controversial. Makes several contacts with the 16S rRNA in the 70S ribosome. The polypeptide is Large ribosomal subunit protein uL2 (Thermus thermophilus (strain ATCC BAA-163 / DSM 7039 / HB27)).